The following is a 276-amino-acid chain: Formamidopyrimidine-DNA glycosylase (276 aa).

P2 acts as the Schiff-base intermediate with DNA in catalysis. E3 (proton donor) is an active-site residue. The Proton donor; for beta-elimination activity role is filled by K60. Residues H93 and R112 each coordinate DNA. The segment at 240 to 274 (NVYGKKGEPCVTCGTILEKTVVGGRGTHYCPICQP) adopts an FPG-type zinc-finger fold. R264 functions as the Proton donor; for delta-elimination activity in the catalytic mechanism.

Belongs to the FPG family. In terms of assembly, monomer. Zn(2+) serves as cofactor.

It catalyses the reaction Hydrolysis of DNA containing ring-opened 7-methylguanine residues, releasing 2,6-diamino-4-hydroxy-5-(N-methyl)formamidopyrimidine.. The enzyme catalyses 2'-deoxyribonucleotide-(2'-deoxyribose 5'-phosphate)-2'-deoxyribonucleotide-DNA = a 3'-end 2'-deoxyribonucleotide-(2,3-dehydro-2,3-deoxyribose 5'-phosphate)-DNA + a 5'-end 5'-phospho-2'-deoxyribonucleoside-DNA + H(+). Involved in base excision repair of DNA damaged by oxidation or by mutagenic agents. Acts as a DNA glycosylase that recognizes and removes damaged bases. Has a preference for oxidized purines, such as 7,8-dihydro-8-oxoguanine (8-oxoG). Has AP (apurinic/apyrimidinic) lyase activity and introduces nicks in the DNA strand. Cleaves the DNA backbone by beta-delta elimination to generate a single-strand break at the site of the removed base with both 3'- and 5'-phosphates. The protein is Formamidopyrimidine-DNA glycosylase of Bacillus cereus (strain ATCC 14579 / DSM 31 / CCUG 7414 / JCM 2152 / NBRC 15305 / NCIMB 9373 / NCTC 2599 / NRRL B-3711).